We begin with the raw amino-acid sequence, 510 residues long: Beta-glucosidase 26 (510 aa).

Residues 1–27 (MRKFIAALRLALAAAAHLLLTLPPAQC) form the signal peptide. Glutamine 59 contacts a beta-D-glucoside. 2 N-linked (GlcNAc...) asparagine glycosylation sites follow: asparagine 87 and asparagine 127. A beta-D-glucoside-binding positions include histidine 160 and 205–206 (NE). Residue glutamate 206 is the Proton donor of the active site. Residues cysteine 225 and cysteine 228 are joined by a disulfide bond. Asparagine 233 carries N-linked (GlcNAc...) asparagine glycosylation. Positions 345 and 416 each coordinate a beta-D-glucoside. The Nucleophile role is filled by glutamate 416. Asparagine 424 carries an N-linked (GlcNAc...) asparagine glycan. A beta-D-glucoside is bound by residues tryptophan 463, 470-471 (EW), and phenylalanine 479.

This sequence belongs to the glycosyl hydrolase 1 family.

It catalyses the reaction Hydrolysis of terminal, non-reducing beta-D-glucosyl residues with release of beta-D-glucose.. In terms of biological role, hydrolyzes p-nitrophenyl beta-D-glucoside, p-nitrophenyl beta-D-mannoside, p-nitrophenyl beta-D-galactoside, p-nitrophenyl beta-D-xyloside, p-nitrophenyl beta-D-fucoside, p-nitrophenyl beta-L-arabinoside, cello-oligosaccharides, laminari-oligosaccharides and sophorose. In Oryza sativa subsp. japonica (Rice), this protein is Beta-glucosidase 26 (BGLU26).